The primary structure comprises 288 residues: 33 kDa chaperonin (288 aa).

Intrachain disulfides connect Cys236/Cys238 and Cys269/Cys272.

Belongs to the HSP33 family. Under oxidizing conditions two disulfide bonds are formed involving the reactive cysteines. Under reducing conditions zinc is bound to the reactive cysteines and the protein is inactive.

It localises to the cytoplasm. Its function is as follows. Redox regulated molecular chaperone. Protects both thermally unfolding and oxidatively damaged proteins from irreversible aggregation. Plays an important role in the bacterial defense system toward oxidative stress. This chain is 33 kDa chaperonin, found in Syntrophotalea carbinolica (strain DSM 2380 / NBRC 103641 / GraBd1) (Pelobacter carbinolicus).